Reading from the N-terminus, the 396-residue chain is MFLKAVVLTLALVAVAGARAEVSADQVATVMWDYFSQLSNNAKEAVEHLQKSELTQQLNALFQDKLGEVNTYAGDLQKKLVPFATELHERLAKDSEKLKEEIGKELEELRARLLPHANEVSQKIGDNLRELQQRLEPYADQLRTQVSTQAEQLRRQLTPYAQRMERVLRENADSLQASLRPHADELKAKIDQNVEELKGRLTPYADEFKVKIDQTVEELRRSLAPYAQDTQEKLNHQLEGLTFQMKKNAEELKARISASAEELRQRLAPLAEDVRGNLRGNTEGLQKSLAELGGHLDQQVEEFRRRVEPYGENFNKALVQQMEQLRQKLGPHAGDVEGHLSFLEKDLRDKVNSFFSTFKEKESQDKTLSLPELEQQQEQQQEQQQEQVQMLAPLES.

An N-terminal signal peptide occupies residues 1-20; sequence MFLKAVVLTLALVAVAGARA. 13 consecutive repeat copies span residues 33 to 54, 60 to 81, 82 to 103, 115 to 136, 137 to 158, 159 to 180, 181 to 202, 203 to 224, 225 to 246, 247 to 268, 269 to 286, 287 to 308, and 309 to 330. The segment at 33 to 330 is 13 X 22 AA approximate tandem repeats; it reads DYFSQLSNNA…QMEQLRQKLG (298 aa). The segment at 361–396 is disordered; sequence KESQDKTLSLPELEQQQEQQQEQQQEQVQMLAPLES. Positions 374-389 are enriched in low complexity; that stretch reads EQQQEQQQEQQQEQVQ.

It belongs to the apolipoprotein A1/A4/E family. Homodimer. Phosphorylation sites are present in the extracellular medium. In terms of tissue distribution, synthesized primarily in the intestine and secreted in plasma.

It is found in the secreted. Functionally, may have a role in chylomicrons and VLDL secretion and catabolism. Required for efficient activation of lipoprotein lipase by ApoC-II; potent activator of LCAT. Apoa-IV is a major component of HDL and chylomicrons. The polypeptide is Apolipoprotein A-IV (Homo sapiens (Human)).